Reading from the N-terminus, the 331-residue chain is Uroporphyrinogen decarboxylase (331 aa).

Substrate-binding positions include 22-26, D71, Y145, S199, and H308; that span reads RQAGR.

Belongs to the uroporphyrinogen decarboxylase family. As to quaternary structure, homodimer.

The protein resides in the cytoplasm. The enzyme catalyses uroporphyrinogen III + 4 H(+) = coproporphyrinogen III + 4 CO2. Its pathway is porphyrin-containing compound metabolism; protoporphyrin-IX biosynthesis; coproporphyrinogen-III from 5-aminolevulinate: step 4/4. Its function is as follows. Catalyzes the decarboxylation of four acetate groups of uroporphyrinogen-III to yield coproporphyrinogen-III. This is Uroporphyrinogen decarboxylase from Picrophilus torridus (strain ATCC 700027 / DSM 9790 / JCM 10055 / NBRC 100828 / KAW 2/3).